The primary structure comprises 336 residues: Nucleoid-associated protein Spro_3255 (336 aa).

Belongs to the YejK family.

Its subcellular location is the cytoplasm. It is found in the nucleoid. The polypeptide is Nucleoid-associated protein Spro_3255 (Serratia proteamaculans (strain 568)).